The chain runs to 363 residues: UDP-3-O-acylglucosamine N-acyltransferase (363 aa).

Catalysis depends on His-259, which acts as the Proton acceptor.

Belongs to the transferase hexapeptide repeat family. LpxD subfamily. Homotrimer.

It carries out the reaction a UDP-3-O-[(3R)-3-hydroxyacyl]-alpha-D-glucosamine + a (3R)-hydroxyacyl-[ACP] = a UDP-2-N,3-O-bis[(3R)-3-hydroxyacyl]-alpha-D-glucosamine + holo-[ACP] + H(+). It functions in the pathway bacterial outer membrane biogenesis; LPS lipid A biosynthesis. Its function is as follows. Catalyzes the N-acylation of UDP-3-O-acylglucosamine using 3-hydroxyacyl-ACP as the acyl donor. Is involved in the biosynthesis of lipid A, a phosphorylated glycolipid that anchors the lipopolysaccharide to the outer membrane of the cell. The sequence is that of UDP-3-O-acylglucosamine N-acyltransferase from Ruegeria pomeroyi (strain ATCC 700808 / DSM 15171 / DSS-3) (Silicibacter pomeroyi).